The sequence spans 517 residues: Glutamate--cysteine ligase (517 aa).

Belongs to the glutamate--cysteine ligase type 1 family. Type 1 subfamily.

It carries out the reaction L-cysteine + L-glutamate + ATP = gamma-L-glutamyl-L-cysteine + ADP + phosphate + H(+). The protein operates within sulfur metabolism; glutathione biosynthesis; glutathione from L-cysteine and L-glutamate: step 1/2. This Pectobacterium atrosepticum (strain SCRI 1043 / ATCC BAA-672) (Erwinia carotovora subsp. atroseptica) protein is Glutamate--cysteine ligase.